The primary structure comprises 346 residues: Fe(3+) ions import ATP-binding protein FbpC 1 (346 aa).

The region spanning 5-235 is the ABC transporter domain; sequence LEVDGVDKSF…PIDVPTAEFI (231 aa). 37 to 44 provides a ligand contact to ATP; the sequence is GPSGCGKT.

This sequence belongs to the ABC transporter superfamily. Fe(3+) ion importer (TC 3.A.1.10) family. The complex is composed of two ATP-binding proteins (FbpC), two transmembrane proteins (FbpB) and a solute-binding protein (FbpA).

It is found in the cell membrane. The enzyme catalyses Fe(3+)(out) + ATP + H2O = Fe(3+)(in) + ADP + phosphate + H(+). In terms of biological role, part of the ABC transporter complex FbpABC involved in Fe(3+) ions import. Responsible for energy coupling to the transport system. The protein is Fe(3+) ions import ATP-binding protein FbpC 1 of Rhodococcus jostii (strain RHA1).